A 372-amino-acid chain; its full sequence is MHC class I-like protein MILL2 (372 aa).

The N-terminal stretch at 1–26 (MEASSGTAGPAVLLLILALLLTESQG) is a signal peptide. The tract at residues 28-119 (RSQGTHTLRY…MINQKGHDKG (92 aa)) is alpha-1. Intrachain disulfides connect cysteine 78–cysteine 89, cysteine 129–cysteine 191, and cysteine 230–cysteine 287. The segment at 120–210 (PYTLQATLDC…SLSNVLPDTG (91 aa)) is alpha-2. Residues asparagine 134, asparagine 234, and asparagine 293 are each glycosylated (N-linked (GlcNAc...) asparagine). An Ig-like C1-type domain is found at 192–302 (PARLQRHLAS…NRTIMQTAVS (111 aa)). The segment at 211 to 339 (SPVVIVTCRN…VVDGGLVTGN (129 aa)) is alpha-3. Positions 308–349 (WPSASWATRQEAEGPHRTHNDHVVDGGLVTGNANKDSPDASS) are disordered. The span at 317 to 331 (QEAEGPHRTHNDHVV) shows a compositional bias: basic and acidic residues. A connecting peptide region spans residues 340 to 348 (ANKDSPDAS). Serine 349 is lipidated: GPI-anchor amidated serine. Residues 350-372 (CATASAISAFPVVVLSVALPRAN) constitute a propeptide, removed in mature form.

Belongs to the MHC class I family. As to quaternary structure, heterodimer with B2M. Ubiquitously expressed in neonatal and adult tissues.

The protein resides in the cell membrane. In terms of biological role, binds to heparan sulfate proteoglycans on the surface of fibroblast cells. The sequence is that of MHC class I-like protein MILL2 from Rattus norvegicus (Rat).